The primary structure comprises 461 residues: Asparagine--tRNA ligase (461 aa).

Belongs to the class-II aminoacyl-tRNA synthetase family. As to quaternary structure, homodimer.

The protein localises to the cytoplasm. It catalyses the reaction tRNA(Asn) + L-asparagine + ATP = L-asparaginyl-tRNA(Asn) + AMP + diphosphate + H(+). The polypeptide is Asparagine--tRNA ligase (Geobacter sulfurreducens (strain ATCC 51573 / DSM 12127 / PCA)).